Reading from the N-terminus, the 334-residue chain is Glyceraldehyde-3-phosphate dehydrogenase (334 aa).

Residues 11–12, D33, and S119 each bind NAD(+); that span reads RI. Residues 149–151 and T180 each bind D-glyceraldehyde 3-phosphate; that span reads SCT. The Nucleophile role is filled by C150. NAD(+) is bound at residue N181. Residues R197, 210 to 211, and R233 contribute to the D-glyceraldehyde 3-phosphate site; that span reads TG. N314 serves as a coordination point for NAD(+).

The protein belongs to the glyceraldehyde-3-phosphate dehydrogenase family. Homotetramer.

It localises to the cytoplasm. The enzyme catalyses D-glyceraldehyde 3-phosphate + phosphate + NAD(+) = (2R)-3-phospho-glyceroyl phosphate + NADH + H(+). Its pathway is carbohydrate degradation; glycolysis; pyruvate from D-glyceraldehyde 3-phosphate: step 1/5. Catalyzes the oxidative phosphorylation of glyceraldehyde 3-phosphate (G3P) to 1,3-bisphosphoglycerate (BPG) using the cofactor NAD. The first reaction step involves the formation of a hemiacetal intermediate between G3P and a cysteine residue, and this hemiacetal intermediate is then oxidized to a thioester, with concomitant reduction of NAD to NADH. The reduced NADH is then exchanged with the second NAD, and the thioester is attacked by a nucleophilic inorganic phosphate to produce BPG. The chain is Glyceraldehyde-3-phosphate dehydrogenase (gap) from Clostridium acetobutylicum (strain ATCC 824 / DSM 792 / JCM 1419 / IAM 19013 / LMG 5710 / NBRC 13948 / NRRL B-527 / VKM B-1787 / 2291 / W).